Reading from the N-terminus, the 450-residue chain is tRNA-aminoacylation cofactor arc1 (450 aa).

A disordered region spans residues 208–278 (QRPSVIKKDK…KEPPKAATPV (71 aa)). Composition is skewed to basic and acidic residues over residues 213–225 (IKKD…EGKP) and 233–247 (SVEK…AKKE). Basic residues predominate over residues 248–261 (KQNKKEKKDKKDKK). The span at 262–272 (DKKEKAPKEPP) shows a compositional bias: basic and acidic residues. The tRNA-binding domain maps to 278–382 (VPSMIDFRIG…ENAEIGDRLT (105 aa)).

This sequence belongs to the tRNA-aminoacylation cofactor ARC1 family. Component of a yeast aminoacyl-tRNA synthase (aaRS) complex formed by methionyl-tRNA synthase, glutamyl-tRNA synthase and the tRNA aminoacylation cofactor arc1 in a stoichiometric complex. Interacts with rar1/mes1 and gus1.

The protein localises to the cytoplasm. Its function is as follows. Binds to tRNA and functions as a cofactor for the methionyl-tRNA synthetase (MetRS) and glutamyl-tRNA synthetase (GluRS). Forms a complex with MetRS and GluRS and increases their affinity for cognate tRNAs due to the presence of a tRNA binding domain in its middle and C-terminal part. This is tRNA-aminoacylation cofactor arc1 from Schizosaccharomyces pombe (strain 972 / ATCC 24843) (Fission yeast).